A 620-amino-acid chain; its full sequence is Chaperone protein DnaK (620 aa).

The residue at position 174 (threonine 174) is a Phosphothreonine; by autocatalysis. The segment at 590 to 620 is disordered; the sequence is AAGAGPDMSGAGPQGDTYAGDDVVDGDYREV.

Belongs to the heat shock protein 70 family.

Acts as a chaperone. The chain is Chaperone protein DnaK from Lachnoclostridium phytofermentans (strain ATCC 700394 / DSM 18823 / ISDg) (Clostridium phytofermentans).